The chain runs to 359 residues: 4-galactosyl-N-acetylglucosaminide 3-alpha-L-fucosyltransferase 9 (359 aa).

Residues 1–11 (MTSTSKGILRP) are Cytoplasmic-facing. A helical; Signal-anchor for type II membrane protein transmembrane segment spans residues 12-32 (FLIVCVILACFMACLLIYIKP). The Lumenal segment spans residues 33-359 (TNSWVFSPME…VGNLEKWFWN (327 aa)). The N-linked (GlcNAc...) asparagine glycan is linked to asparagine 62. Residues 63-168 (ETTILVWVWP…RRDSDIQVPY (106 aa)) are acceptor-binding. Position 75 (glutamine 75) interacts with a beta-D-galactosyl-(1-&gt;4)-N-acetyl-beta-D-glucosaminyl derivative. 3 cysteine pairs are disulfide-bonded: cysteine 82/cysteine 335, cysteine 91/cysteine 338, and cysteine 190/cysteine 238. Residue asparagine 101 is glycosylated (N-linked (GlcNAc...) asparagine). Residue glutamate 137 coordinates a beta-D-galactosyl-(1-&gt;4)-N-acetyl-beta-D-glucosaminyl derivative. Glutamate 137 functions as the Nucleophile in the catalytic mechanism. Position 137 (glutamate 137) interacts with GDP-beta-L-fucose. Asparagine 153 carries N-linked (GlcNAc...) asparagine glycosylation. GDP-beta-L-fucose contacts are provided by tyrosine 168, valine 192, serine 194, asparagine 195, arginine 202, valine 226, tyrosine 241, asparagine 246, tyrosine 252, glutamate 255, and lysine 256. Positions 169–326 (GFLTVSTNPF…NWRKDFTVNL (158 aa)) are donor-binding. The tract at residues 327–359 (PRFWESHACLACDHVKRHQEYKSVGNLEKWFWN) is acceptor-binding.

This sequence belongs to the glycosyltransferase 10 family. Homodimer. Post-translationally, N-glycosylated with complex-type N-glycans.

Its subcellular location is the golgi apparatus. The protein resides in the trans-Golgi network membrane. It is found in the golgi apparatus membrane. The enzyme catalyses a beta-D-galactosyl-(1-&gt;4)-N-acetyl-beta-D-glucosaminyl derivative + GDP-beta-L-fucose = a beta-D-galactosyl-(1-&gt;4)-[alpha-L-fucosyl-(1-&gt;3)]-N-acetyl-beta-D-glucosaminyl derivative + GDP + H(+). It carries out the reaction an alpha-Neu5Ac-(2-&gt;3)-beta-D-Gal-(1-&gt;4)-beta-D-GlcNAc-(1-&gt;3)-beta-D-Gal-(1-&gt;4)-beta-D-GlcNAc derivative + GDP-beta-L-fucose = an alpha-Neu5Ac-(2-&gt;3)-beta-D-Gal-(1-&gt;4)-beta-D-GlcNAc-(1-&gt;3)-beta-D-Gal-(1-&gt;4)-[alpha-L-Fuc-(1-&gt;3)]-beta-D-GlcNAc derivative + GDP + H(+). The catalysed reaction is alpha-N-glycoloylneuraminosyl-(2-&gt;3)-beta-D-galactosyl-(1-&gt;4)-N-acetyl-beta-D-glucosaminyl-(1-&gt;3)-beta-D-galactosyl-(1-&gt;4)-N-acetyl-beta-D-glucosaminyl-(1-&gt;3)-beta-D-galactosyl-(1-&gt;4)-beta-D-glucosyl-(1&lt;-&gt;1')-ceramide + GDP-beta-L-fucose = alpha-N-glycoloylneuraminosyl-(2-&gt;3)-beta-D-galactosyl-(1-&gt;4)-N-acetyl-beta-D-glucosaminyl-(1-&gt;3)-beta-D-galactosyl-(1-&gt;4)-[alpha-L-fucosyl-(1-&gt;3)]-N-acetyl-beta-D-glucosaminyl-(1-&gt;3)-beta-D-galactosyl-(1-&gt;4)-beta-D-glucosyl-(1&lt;-&gt;1')-ceramide + GDP + H(+). It catalyses the reaction alpha-D-galactosyl-(1-&gt;3)-beta-D-galactosyl-(1-&gt;4)-N-acetyl-beta-D-glucosaminyl-(1-&gt;3)-beta-D-galactosyl-(1-&gt;4)-beta-D-glucosyl-(1&lt;-&gt;1')-ceramide + GDP-beta-L-fucose = a neolactoside IV(3)-alpha-Gal,III(3)-alpha-Fuc-nLc4Cer + GDP + H(+). The enzyme catalyses a neolactoside nLc4Cer + GDP-beta-L-fucose = a neolactoside III(3)-alpha-Fuc-nLc4Cer + GDP + H(+). It carries out the reaction an N-acetyl-alpha-neuraminyl-(2-&gt;3)-beta-D-galactosyl-(1-&gt;4)-N-acetyl-beta-D-glucosaminyl derivative + GDP-beta-L-fucose = an alpha-Neu5Ac-(2-&gt;3)-beta-D-Gal-(1-&gt;4)-[alpha-L-Fuc-(1-&gt;3)]-beta-D-GlcNAc derivative + GDP + H(+). The catalysed reaction is beta-D-Gal-(1-&gt;4)-beta-D-GlcNAc-(1-&gt;3)-beta-D-Gal-(1-&gt;4)-D-Glc + GDP-beta-L-fucose = beta-D-Gal-(1-&gt;4)-[alpha-L-Fuc-(1-&gt;3)]-beta-D-GlcNAc-(1-&gt;3)-beta-D-Gal-(1-&gt;4)-D-Glc + GDP + H(+). It catalyses the reaction an alpha-L-Fuc-(1-&gt;2)-beta-D-Gal-(1-&gt;4)-beta-D-GlcNAc derivative + GDP-beta-L-fucose = an alpha-L-Fuc-(1-&gt;2)-beta-D-Gal-(1-&gt;4)-[alpha-L-Fuc-(1-&gt;3)]-beta-D-GlcNAc derivative + GDP + H(+). It participates in protein modification; protein glycosylation. The protein operates within glycolipid biosynthesis. With respect to regulation, activated by Mn2+. Catalyzes alpha(1-&gt;3) linkage of fucosyl moiety transferred from GDP-beta-L-fucose to N-acetyl glucosamine (GlcNAc) within type 2 lactosamine (LacNAc, beta-D-Gal-(1-&gt;4)-beta-D-GlcNAc-) glycan attached to glycolipids and N- or O-linked glycoproteins. Fucosylates distal type 2 LacNAc and its fucosylated (H-type 2 LacNAc) and sialylated (sialyl-type 2 LacNAc) derivatives to form Lewis x (Lex) (CD15) and Lewis y (Ley) antigenic epitopes involved in cell adhesion and differentiation. Generates Lex epitopes in the brain, presumably playing a role in the maintenance of neuronal stemness and neurite outgrowth in progenitor neural cells. Fucosylates the internal type 2 LacNAc unit of the polylactosamine chain to form VIM-2 antigen that serves as recognition epitope for SELE. Can also modify milk oligosaccharides in particular type 2 tetrasaccharide LNnT. In Cricetulus griseus (Chinese hamster), this protein is 4-galactosyl-N-acetylglucosaminide 3-alpha-L-fucosyltransferase 9.